Here is a 654-residue protein sequence, read N- to C-terminus: tRNA 5-methylaminomethyl-2-thiouridine biosynthesis bifunctional protein MnmC (654 aa).

A tRNA (mnm(5)s(2)U34)-methyltransferase region spans residues 1-236 (MSTLLQHAQI…KWEVMHGVYT (236 aa)). The tract at residues 262 to 654 (IGAGLAGSAT…FALRRLIRGK (393 aa)) is FAD-dependent cmnm(5)s(2)U34 oxidoreductase.

This sequence in the N-terminal section; belongs to the methyltransferase superfamily. tRNA (mnm(5)s(2)U34)-methyltransferase family. It in the C-terminal section; belongs to the DAO family. The cofactor is FAD.

The protein resides in the cytoplasm. The catalysed reaction is 5-aminomethyl-2-thiouridine(34) in tRNA + S-adenosyl-L-methionine = 5-methylaminomethyl-2-thiouridine(34) in tRNA + S-adenosyl-L-homocysteine + H(+). Its function is as follows. Catalyzes the last two steps in the biosynthesis of 5-methylaminomethyl-2-thiouridine (mnm(5)s(2)U) at the wobble position (U34) in tRNA. Catalyzes the FAD-dependent demodification of cmnm(5)s(2)U34 to nm(5)s(2)U34, followed by the transfer of a methyl group from S-adenosyl-L-methionine to nm(5)s(2)U34, to form mnm(5)s(2)U34. In Pseudomonas entomophila (strain L48), this protein is tRNA 5-methylaminomethyl-2-thiouridine biosynthesis bifunctional protein MnmC.